Reading from the N-terminus, the 140-residue chain is Protein NrdI (140 aa).

Belongs to the NrdI family.

Probably involved in ribonucleotide reductase function. The sequence is that of Protein NrdI from Photorhabdus laumondii subsp. laumondii (strain DSM 15139 / CIP 105565 / TT01) (Photorhabdus luminescens subsp. laumondii).